Here is a 499-residue protein sequence, read N- to C-terminus: Maturase K (499 aa).

The protein belongs to the intron maturase 2 family. MatK subfamily.

The protein resides in the plastid. The protein localises to the chloroplast. Functionally, usually encoded in the trnK tRNA gene intron. Probably assists in splicing its own and other chloroplast group II introns. The polypeptide is Maturase K (Neltuma juliflora (Mesquite)).